The sequence spans 261 residues: Thiazole synthase (261 aa).

Lysine 102 functions as the Schiff-base intermediate with DXP in the catalytic mechanism. 1-deoxy-D-xylulose 5-phosphate is bound by residues glycine 163, 189–190, and 211–212; these read AG and NT.

The protein belongs to the ThiG family. As to quaternary structure, homotetramer. Forms heterodimers with either ThiH or ThiS.

It is found in the cytoplasm. The enzyme catalyses [ThiS sulfur-carrier protein]-C-terminal-Gly-aminoethanethioate + 2-iminoacetate + 1-deoxy-D-xylulose 5-phosphate = [ThiS sulfur-carrier protein]-C-terminal Gly-Gly + 2-[(2R,5Z)-2-carboxy-4-methylthiazol-5(2H)-ylidene]ethyl phosphate + 2 H2O + H(+). Its pathway is cofactor biosynthesis; thiamine diphosphate biosynthesis. Catalyzes the rearrangement of 1-deoxy-D-xylulose 5-phosphate (DXP) to produce the thiazole phosphate moiety of thiamine. Sulfur is provided by the thiocarboxylate moiety of the carrier protein ThiS. In vitro, sulfur can be provided by H(2)S. The sequence is that of Thiazole synthase from Acinetobacter baumannii (strain SDF).